The primary structure comprises 253 residues: Claudin domain-containing protein 1 (253 aa).

Residues phenylalanine 5–alanine 25 form a helical membrane-spanning segment. Residues asparagine 42 and asparagine 72 are each glycosylated (N-linked (GlcNAc...) asparagine). 3 consecutive transmembrane segments (helical) span residues phenylalanine 141–alanine 161, isoleucine 175–isoleucine 195, and phenylalanine 216–alanine 236.

This sequence belongs to the PMP-22/EMP/MP20 family. As to expression, in the brain, highly expressed in endothelial cells of the cerebellum compared to other regions (at protein level).

The protein resides in the cell junction. Its subcellular location is the tight junction. It is found in the cell membrane. Its function is as follows. Plays a role in negatively regulating the permeability of cells to small molecules. This is Claudin domain-containing protein 1 (Cldnd1) from Mus musculus (Mouse).